A 259-amino-acid chain; its full sequence is MAARRVLKAVLVDLSGTLHIEDAAVPGAQEALKRLRAASVMVRFVTNTTKESKRDLLERLRKLEFDISEEEIFTSLTAARNLIEQRQVRPMLLVDDRALPDFTGVQTHDPNAVVIGLAPEHFHYQLLNEAFRLLLDGAPLIAIHKARYYKRKDGLALGPGPFVTALEYATDTKAVVVGKPEKTFFLEALRDTDCAPEEAVMIGDDCRDDVDGAQNIGMLGILVKTGKYKAADEEKINPPPYLTCESFPHAVDHILQHLL.

Positions 13 and 15 each coordinate Mg(2+). Substrate-binding positions include 13–15 and 46–47; these read DLS and TN. Residues 49–71 are a coiled coil; the sequence is TKESKRDLLERLRKLEFDISEEE. N6-succinyllysine is present on Lys-50. Lys-179 lines the substrate pocket. Asp-204 is a Mg(2+) binding site.

Belongs to the HAD-like hydrolase superfamily. Mg(2+) serves as cofactor.

This Rattus norvegicus (Rat) protein is Haloacid dehalogenase-like hydrolase domain-containing protein 2 (Hdhd2).